The following is an 87-amino-acid chain: Large ribosomal subunit protein bL31B (87 aa).

This sequence belongs to the bacterial ribosomal protein bL31 family. Type B subfamily. Part of the 50S ribosomal subunit.

This is Large ribosomal subunit protein bL31B from Shigella boydii serotype 4 (strain Sb227).